We begin with the raw amino-acid sequence, 242 residues long: 3-dehydroquinate dehydratase (242 aa).

3-dehydroquinate-binding positions include 39-41 (EIR) and Arg-73. The Proton donor/acceptor role is filled by His-135. The Schiff-base intermediate with substrate role is filled by Lys-162. 3-dehydroquinate is bound by residues Arg-203 and Gln-228.

This sequence belongs to the type-I 3-dehydroquinase family. In terms of assembly, homodimer.

It catalyses the reaction 3-dehydroquinate = 3-dehydroshikimate + H2O. The protein operates within metabolic intermediate biosynthesis; chorismate biosynthesis; chorismate from D-erythrose 4-phosphate and phosphoenolpyruvate: step 3/7. Involved in the third step of the chorismate pathway, which leads to the biosynthesis of aromatic amino acids. Catalyzes the cis-dehydration of 3-dehydroquinate (DHQ) and introduces the first double bond of the aromatic ring to yield 3-dehydroshikimate. The protein is 3-dehydroquinate dehydratase of Methanosarcina mazei (strain ATCC BAA-159 / DSM 3647 / Goe1 / Go1 / JCM 11833 / OCM 88) (Methanosarcina frisia).